Reading from the N-terminus, the 79-residue chain is Orally active insecticidal peptide (79 aa).

Residues 1–19 form the signal peptide; the sequence is MRVLFIIAGLALLSVVCYT. Residues 20–44 constitute a propeptide that is removed on maturation; sequence SEMKERSSFNEVLSEFFAADEPQER. Intrachain disulfides connect cysteine 46–cysteine 61, cysteine 53–cysteine 66, and cysteine 60–cysteine 73. The residue at position 77 (alanine 77) is an Alanine amide.

The protein belongs to the neurotoxin 03 (Tx2) family. 01 subfamily. As to expression, expressed by the venom gland.

It localises to the secreted. Functionally, probable ion channel inhibitor. Shows insecticidal activity when injected into mealworms. In Selenotypus plumipes (Australian featherleg tarantula), this protein is Orally active insecticidal peptide.